We begin with the raw amino-acid sequence, 151 residues long: Large ribosomal subunit protein uL15 (151 aa).

This sequence belongs to the universal ribosomal protein uL15 family. Part of the 50S ribosomal subunit.

Its function is as follows. Binds to the 23S rRNA. The sequence is that of Large ribosomal subunit protein uL15 from Hyperthermus butylicus (strain DSM 5456 / JCM 9403 / PLM1-5).